Reading from the N-terminus, the 260-residue chain is Large ribosomal subunit protein uL30 (260 aa).

Position 1 is an N-acetylmethionine (Met-1). 5 consecutive repeat copies span residues 7–18 (KKKKVAAALGTL), 19–30 (KKKKVPAVPETL), 31–42 (KKKRRNFAELKV), 43–54 (KRLRKKFALKTL), and 55–66 (RKARRKLIYEKA). Residues 7–66 (KKKKVAAALGTLKKKKVPAVPETLKKKRRNFAELKVKRLRKKFALKTLRKARRKLIYEKA) are 5 X 12 AA tandem repeats. Thr-29 carries the post-translational modification Phosphothreonine. Lys-136 bears the N6-acetyllysine mark. Lys-139 carries the N6-succinyllysine modification. Tyr-151 carries the phosphotyrosine modification.

The protein belongs to the universal ribosomal protein uL30 family. Component of the large ribosomal subunit. Homodimer. Interacts with DHX33.

It localises to the cytoplasm. In terms of biological role, component of the large ribosomal subunit. The ribosome is a large ribonucleoprotein complex responsible for the synthesis of proteins in the cell. Binds to G-rich structures in 28S rRNA and in mRNAs. Plays a regulatory role in the translation apparatus; inhibits cell-free translation of mRNAs. The polypeptide is Large ribosomal subunit protein uL30 (Rpl7) (Rattus norvegicus (Rat)).